Reading from the N-terminus, the 1948-residue chain is [F-actin]-monooxygenase MICAL2 (1948 aa).

Positions 2–494 (GENEDEKQAQ…KHLYITKEMD (493 aa)) are monooxygenase domain. Residues Cys97, 116 to 118 (EKR), 123 to 125 (RNN), Phe183, Tyr298, and Asp398 each bind FAD. The 104-residue stretch at 516-619 (DIRPNKLLTW…MVMYLSKFYE (104 aa)) folds into the Calponin-homology (CH) domain. Residue Ser631 is modified to Phosphoserine. Residues 660–681 (RKRTPRVDAQTEENDVNKRRRQ) carry the Nuclear localization signal motif. 3 disordered regions span residues 664–709 (PRVD…ESGN), 753–776 (SRPP…PPLK), and 891–923 (KRVP…DSVS). The segment covering 693–709 (SSRSLGSSQEYAKESGN) has biased composition (polar residues). Residues 896-917 (AHPPSPPSCLPSPDPAAAPSPP) are compositionally biased toward pro residues. The 63-residue stretch at 980 to 1042 (DTCYFCKKRV…KLHFAHCKTS (63 aa)) folds into the LIM zinc-binding domain. Zn(2+)-binding residues include Cys982, Cys985, His1003, Cys1006, Cys1009, Cys1012, Cys1032, and His1035. Disordered stretches follow at residues 1045–1134 (QRKR…GQDG), 1146–1185 (SEDS…QPLT), and 1233–1298 (QSNS…DDVS). A compositionally biased stretch (basic and acidic residues) spans 1050 to 1059 (AELNQQREEE). Over residues 1233–1243 (QSNSTPMNQRA) the composition is skewed to polar residues. Over residues 1254-1271 (SSSSSPSLPSSFSSASVP) the composition is skewed to low complexity. Polar residues predominate over residues 1277–1292 (DSSSPQVTYNLHSPQI). Positions 1300 to 1339 (TPIYLRRARAQGITKEIPLYLPHSPMLESTEHCLVSPDGE) are interaction with MAPK1. Disordered stretches follow at residues 1478–1505 (QKKA…KSPL), 1519–1622 (SSEA…SSKV), 1672–1726 (GDFF…QAGK), and 1739–1767 (SGPG…QLSS). The span at 1522 to 1534 (AGKKTSSKPETKT) shows a compositional bias: basic and acidic residues. The span at 1570–1579 (KASAFFSLAS) shows a compositional bias: low complexity. A compositionally biased stretch (polar residues) spans 1580–1591 (PTSKAAQASDLS). Residues 1672-1682 (GDFFNSPKEKG) are compositionally biased toward basic and acidic residues. Ser1677 carries the post-translational modification Phosphoserine. Composition is skewed to polar residues over residues 1698-1715 (VDST…TGQD) and 1747-1756 (EDTSSPTSSS). Residues 1786–1936 (KQEELKRLHK…ERTQDQHFEN (151 aa)) enclose the bMERB domain.

The protein belongs to the Mical family. Interacts with PLXNA4. Interacts with RAB1B. Interacts with MAPK1/ERK2. Interacts with RAB35, RAB8A, RAB10, RAB13 and RAB15 (in their GTP-bound forms); binding to RAB35 is of low affinity compared to other Rab proteins; at least in case of RAB8A may bind 2 molecules of RAB8A simultaneously through a high and a low affinity binding site, respectively. May interact with MAPK1/ERK2. It depends on FAD as a cofactor.

It is found in the nucleus. The protein resides in the cytoplasm. The catalysed reaction is L-methionyl-[F-actin] + NADPH + O2 + H(+) = L-methionyl-(R)-S-oxide-[F-actin] + NADP(+) + H2O. Its function is as follows. Methionine monooxygenase that promotes depolymerization of F-actin by mediating oxidation of residues 'Met-44' and 'Met-47' on actin to form methionine-sulfoxide, resulting in actin filament disassembly and preventing repolymerization. Regulates the disassembly of branched actin networks also by oxidizing ARP3B-containing ARP2/3 complexes leading to ARP3B dissociation from the network. Acts as a key regulator of the SRF signaling pathway elicited by nerve growth factor and serum: mediates oxidation and subsequent depolymerization of nuclear actin, leading to increase MKL1/MRTF-A presence in the nucleus and promote SRF:MKL1/MRTF-A-dependent gene transcription. Does not activate SRF:MKL1/MRTF-A through RhoA. This is [F-actin]-monooxygenase MICAL2 from Rattus norvegicus (Rat).